The sequence spans 838 residues: Leucine--tRNA ligase (838 aa).

The 'HIGH' region motif lies at 36–46 (PYPSGKIHMGH). A 'KMSKS' region motif is present at residues 611-615 (KMSKS). K614 is an ATP binding site.

The protein belongs to the class-I aminoacyl-tRNA synthetase family.

The protein localises to the cytoplasm. It catalyses the reaction tRNA(Leu) + L-leucine + ATP = L-leucyl-tRNA(Leu) + AMP + diphosphate. This Wolbachia pipientis wMel protein is Leucine--tRNA ligase.